A 289-amino-acid polypeptide reads, in one-letter code: Diaminopimelate epimerase (289 aa).

Residues Asn-11 and Asn-78 each coordinate substrate. Cys-87 acts as the Proton donor in catalysis. Residues Gly-88–Asn-89, Asn-163, Asn-199, and Glu-217–Arg-218 contribute to the substrate site. Cys-226 acts as the Proton acceptor in catalysis. Gly-227–Thr-228 contacts substrate.

The protein belongs to the diaminopimelate epimerase family. As to quaternary structure, homodimer.

The protein localises to the cytoplasm. It catalyses the reaction (2S,6S)-2,6-diaminopimelate = meso-2,6-diaminopimelate. The protein operates within amino-acid biosynthesis; L-lysine biosynthesis via DAP pathway; DL-2,6-diaminopimelate from LL-2,6-diaminopimelate: step 1/1. Its function is as follows. Catalyzes the stereoinversion of LL-2,6-diaminopimelate (L,L-DAP) to meso-diaminopimelate (meso-DAP), a precursor of L-lysine and an essential component of the bacterial peptidoglycan. This Rhodococcus opacus (strain B4) protein is Diaminopimelate epimerase.